The primary structure comprises 289 residues: Rhodopsin (289 aa).

The Extracellular portion of the chain corresponds to 1–7 (YLVNPAA). A helical transmembrane segment spans residues 8–32 (YAALGAYMFLLILIGFPINFLTLYV). Residues 33-44 (TLEHKKLRTPLN) lie on the Cytoplasmic side of the membrane. Residues 45–67 (YILLNLAVANLFMVLGGFTTTMY) traverse the membrane as a helical segment. Residues 68–81 (TSMHGYFVLGRLGC) lie on the Extracellular side of the membrane. A disulfide bridge connects residues Cys-81 and Cys-158. The chain crosses the membrane as a helical span at residues 82–104 (NLEAFFATLGGEIALWSLVVLAI). Residues 105–107 (ERW) carry the 'Ionic lock' involved in activated form stabilization motif. The Cytoplasmic segment spans residues 105–123 (ERWIVVCKPISNFRFTEDH). The chain crosses the membrane as a helical span at residues 124-144 (AIMGLAFTWVMALACAVPPLV). The Extracellular portion of the chain corresponds to 145 to 173 (GWSRYIPEGMQCSCGVDYYTRAEGFNNES). Residue Asn-171 is glycosylated (N-linked (GlcNAc...) asparagine). The chain crosses the membrane as a helical span at residues 174-195 (FVIYMFIVHFLIPLSVIFFCYG). At 196–223 (RLLCAVKEAPAAQQESETTQRAEKEVSR) the chain is on the cytoplasmic side. A helical membrane pass occupies residues 224-245 (MVVIMVIGFLVCWLPYASVAWW). Residues 246–257 (IFCNQGSDFGPI) are Extracellular-facing. A helical transmembrane segment spans residues 258–279 (FMTLPSFFAKSAAIYNPMIYIC). Position 267 is an N6-(retinylidene)lysine (Lys-267). The Cytoplasmic portion of the chain corresponds to 280 to 289 (MNKQFRHCMI).

This sequence belongs to the G-protein coupled receptor 1 family. Opsin subfamily. In terms of processing, phosphorylated on some or all of the serine and threonine residues present in the C-terminal region. Contains one covalently linked retinal chromophore.

Its subcellular location is the membrane. The protein localises to the cell projection. It localises to the cilium. The protein resides in the photoreceptor outer segment. Photoreceptor required for image-forming vision at low light intensity. While most salt water fish species use retinal as chromophore, most freshwater fish use 3-dehydroretinal, or a mixture of retinal and 3-dehydroretinal. Light-induced isomerization of 11-cis to all-trans retinal triggers a conformational change that activates signaling via G-proteins. Subsequent receptor phosphorylation mediates displacement of the bound G-protein alpha subunit by arrestin and terminates signaling. The polypeptide is Rhodopsin (rho) (Abyssocottus korotneffi (Baikalian deep-water sculpin)).